We begin with the raw amino-acid sequence, 690 residues long: NF-kappa-B-repressing factor (690 aa).

Positions 1 to 296 (MEKILQMAEG…FKHTFGEDLV (296 aa)) are active repression domain. Positions 25 to 45 (KPSKGQKRHLSTCDGQNPPKK) match the Nuclear localization signal motif. Disordered regions lie at residues 27 to 87 (SKGQ…NEQT) and 132 to 163 (MYFDSGNPAPSTTSQQANSQSTPEPSPSQTFP). Residue lysine 68 forms a Glycyl lysine isopeptide (Lys-Gly) (interchain with G-Cter in SUMO2) linkage. Positions 142-163 (STTSQQANSQSTPEPSPSQTFP) are enriched in low complexity. Residues 296–388 (VVCQIGMSSY…RVFLQDHCLA (93 aa)) mediate DNA binding. Over residues 414–431 (PTYPSVKSSQCHTGSSPR) the composition is skewed to polar residues. The segment at 414–437 (PTYPSVKSSQCHTGSSPRGSGKKK) is disordered. A Glycyl lysine isopeptide (Lys-Gly) (interchain with G-Cter in SUMO2) cross-link involves residue lysine 500. The 46-residue stretch at 551 to 596 (EDNIGNQLLRKMGWTGGGLGKSGEGIREPISVKEQHKREGLGLDVE) folds into the G-patch domain. Positions 600-664 (KIAKRDIEQI…DRYLVVGRKR (65 aa)) constitute an R3H domain. Residue serine 618 is modified to Phosphoserine. Glycyl lysine isopeptide (Lys-Gly) (interchain with G-Cter in SUMO2) cross-links involve residues lysine 666 and lysine 674.

Interacts with NF-kappa-B. Interacts with XRN2. Interacts (via G-patch domain) with DHX15; promoting the RNA helicase activity of DHX15. Widely and constitutively expressed. Expressed at lower level in colon, peripheral blood lymphocytes, lung and kidney.

It is found in the nucleus. The protein resides in the nucleolus. Functionally, enhances the ATPase activity of DHX15 by acting like a brace that tethers mobile sections of DHX15 together, stabilizing a functional conformation with high RNA affinity of DHX15. Involved in the constitutive silencing of the interferon beta promoter, independently of the virus-induced signals, and in the inhibition of the basal and cytokine-induced iNOS promoter activity. Also involved in the regulation of IL-8 transcription. May also act as a DNA-binding transcription regulator: interacts with a specific negative regulatory element (NRE) 5'-AATTCCTCTGA-3' to mediate transcriptional repression of certain NK-kappa-B responsive genes. The protein is NF-kappa-B-repressing factor of Homo sapiens (Human).